The following is a 217-amino-acid chain: Phosphate-specific transport system accessory protein PhoU homolog 2 (217 aa).

Belongs to the PhoU family. In terms of assembly, homodimer.

It is found in the cytoplasm. Functionally, plays a role in the regulation of phosphate uptake. This is Phosphate-specific transport system accessory protein PhoU homolog 2 from Methanothermobacter thermautotrophicus (strain ATCC 29096 / DSM 1053 / JCM 10044 / NBRC 100330 / Delta H) (Methanobacterium thermoautotrophicum).